The following is a 595-amino-acid chain: Laccase-18 (595 aa).

The first 29 residues, 1-29, serve as a signal peptide directing secretion; it reads MEKLSTAASLFCVVVAATALAMAVVGGEA. Plastocyanin-like domains follow at residues 37-153 and 162-316; these read MVHE…PRNG and KDVP…YAGA. Asn42 and Asn48 each carry an N-linked (GlcNAc...) asparagine glycan. The Cu cation site is built by His87 and His89. An N-linked (GlcNAc...) asparagine glycan is attached at Asn121. Cu cation contacts are provided by His132 and His134. Residues Asn206, Asn345, Asn382, Asn402, Asn409, Asn439, and Asn470 are each glycosylated (N-linked (GlcNAc...) asparagine). The Plastocyanin-like 3 domain occupies 429 to 571; sequence DFPVRPPRPF…ATAFIVEDGP (143 aa). Residues Asn488, His491, His493, His550, Cys551, His552, His556, and Met561 each coordinate Cu cation. The disordered stretch occupies residues 570-595; that stretch reads GPTPETSLPPPPPEFKRCGTNGLSQP.

This sequence belongs to the multicopper oxidase family. Requires Cu cation as cofactor.

It localises to the secreted. The protein resides in the extracellular space. The protein localises to the apoplast. The catalysed reaction is 4 hydroquinone + O2 = 4 benzosemiquinone + 2 H2O. In terms of biological role, lignin degradation and detoxification of lignin-derived products. The chain is Laccase-18 (LAC18) from Oryza sativa subsp. japonica (Rice).